Reading from the N-terminus, the 143-residue chain is Large ribosomal subunit protein uL15 (143 aa).

Residues M1–E51 are disordered. Residues R21–A31 are compositionally biased toward gly residues.

The protein belongs to the universal ribosomal protein uL15 family. As to quaternary structure, part of the 50S ribosomal subunit.

Binds to the 23S rRNA. The chain is Large ribosomal subunit protein uL15 from Variovorax paradoxus (strain S110).